The primary structure comprises 659 residues: Threonine--tRNA ligase (659 aa).

One can recognise a TGS domain in the interval 1 to 60 (MTVYLPDGKPLELPEGATAKDVARALGEGWERRAVGAIVDGELYDLLKPLPQGAKVRLLT). Residues 252–552 (DHRRLGRELE…LIEHFAGDFP (301 aa)) form a catalytic region. Zn(2+) contacts are provided by Cys349, His400, and His529.

This sequence belongs to the class-II aminoacyl-tRNA synthetase family. In terms of assembly, homodimer. Zn(2+) is required as a cofactor.

The protein localises to the cytoplasm. It catalyses the reaction tRNA(Thr) + L-threonine + ATP = L-threonyl-tRNA(Thr) + AMP + diphosphate + H(+). In terms of biological role, catalyzes the attachment of threonine to tRNA(Thr) in a two-step reaction: L-threonine is first activated by ATP to form Thr-AMP and then transferred to the acceptor end of tRNA(Thr). Also edits incorrectly charged L-seryl-tRNA(Thr). In Thermus thermophilus (strain ATCC BAA-163 / DSM 7039 / HB27), this protein is Threonine--tRNA ligase.